Reading from the N-terminus, the 246-residue chain is Acetoacetate decarboxylase (246 aa).

K116 acts as the Schiff-base intermediate with acetoacetate in catalysis.

Belongs to the ADC family.

It catalyses the reaction acetoacetate + H(+) = acetone + CO2. Functionally, catalyzes the conversion of acetoacetate to acetone and carbon dioxide. The protein is Acetoacetate decarboxylase of Burkholderia ambifaria (strain MC40-6).